The following is a 454-amino-acid chain: Bifunctional protein GlmU (454 aa).

The segment at 1–228 is pyrophosphorylase; sequence MTLPLHVVIL…PQHVEGANDP (228 aa). UDP-N-acetyl-alpha-D-glucosamine-binding positions include 10–13, lysine 24, glutamine 76, 81–82, 103–105, glycine 138, glutamate 153, asparagine 168, and asparagine 226; these read LAAG, GT, and YGD. Aspartate 105 is a Mg(2+) binding site. Asparagine 226 provides a ligand contact to Mg(2+). A linker region spans residues 229 to 249; sequence WQLAQLERAWQLRAARTLCLQ. An N-acetyltransferase region spans residues 250 to 454; that stretch reads GVRMADPARV…IEGWKRPTKK (205 aa). Residues arginine 332 and lysine 350 each coordinate UDP-N-acetyl-alpha-D-glucosamine. Residue histidine 362 is the Proton acceptor of the active site. Positions 365 and 376 each coordinate UDP-N-acetyl-alpha-D-glucosamine. Acetyl-CoA-binding positions include alanine 379, 385 to 386, serine 404, alanine 422, and arginine 439; that span reads NY.

This sequence in the N-terminal section; belongs to the N-acetylglucosamine-1-phosphate uridyltransferase family. In the C-terminal section; belongs to the transferase hexapeptide repeat family. Homotrimer. Mg(2+) is required as a cofactor.

The protein localises to the cytoplasm. The catalysed reaction is alpha-D-glucosamine 1-phosphate + acetyl-CoA = N-acetyl-alpha-D-glucosamine 1-phosphate + CoA + H(+). The enzyme catalyses N-acetyl-alpha-D-glucosamine 1-phosphate + UTP + H(+) = UDP-N-acetyl-alpha-D-glucosamine + diphosphate. Its pathway is nucleotide-sugar biosynthesis; UDP-N-acetyl-alpha-D-glucosamine biosynthesis; N-acetyl-alpha-D-glucosamine 1-phosphate from alpha-D-glucosamine 6-phosphate (route II): step 2/2. It participates in nucleotide-sugar biosynthesis; UDP-N-acetyl-alpha-D-glucosamine biosynthesis; UDP-N-acetyl-alpha-D-glucosamine from N-acetyl-alpha-D-glucosamine 1-phosphate: step 1/1. The protein operates within bacterial outer membrane biogenesis; LPS lipid A biosynthesis. Functionally, catalyzes the last two sequential reactions in the de novo biosynthetic pathway for UDP-N-acetylglucosamine (UDP-GlcNAc). The C-terminal domain catalyzes the transfer of acetyl group from acetyl coenzyme A to glucosamine-1-phosphate (GlcN-1-P) to produce N-acetylglucosamine-1-phosphate (GlcNAc-1-P), which is converted into UDP-GlcNAc by the transfer of uridine 5-monophosphate (from uridine 5-triphosphate), a reaction catalyzed by the N-terminal domain. This chain is Bifunctional protein GlmU, found in Xanthomonas euvesicatoria pv. vesicatoria (strain 85-10) (Xanthomonas campestris pv. vesicatoria).